We begin with the raw amino-acid sequence, 273 residues long: Shikimate dehydrogenase (NADP(+)) (273 aa).

Residues 19–21 and T66 contribute to the shikimate site; that span reads SKS. The active-site Proton acceptor is K70. Residues N91 and D107 each contribute to the shikimate site. NADP(+) is bound by residues 131-135 and M218; that span reads GAGGA. Y220 serves as a coordination point for shikimate. Position 242 (G242) interacts with NADP(+).

It belongs to the shikimate dehydrogenase family. As to quaternary structure, homodimer.

It carries out the reaction shikimate + NADP(+) = 3-dehydroshikimate + NADPH + H(+). It functions in the pathway metabolic intermediate biosynthesis; chorismate biosynthesis; chorismate from D-erythrose 4-phosphate and phosphoenolpyruvate: step 4/7. In terms of biological role, involved in the biosynthesis of the chorismate, which leads to the biosynthesis of aromatic amino acids. Catalyzes the reversible NADPH linked reduction of 3-dehydroshikimate (DHSA) to yield shikimate (SA). The sequence is that of Shikimate dehydrogenase (NADP(+)) from Buchnera aphidicola subsp. Acyrthosiphon pisum (strain 5A).